The primary structure comprises 1176 residues: Leucine--tRNA ligase, cytoplasmic (1176 aa).

2 residues coordinate L-leucine: Tyr52 and Tyr54. Residues 60–63 (HLGH) carry the 'HIGH' region motif. The residue at position 167 (Ser167) is a Phosphoserine. The interval 260 to 509 (GPQEYTLLKL…DAGDALIYME (250 aa)) is editing domain. 2 residues coordinate L-leucine: Leu594 and Ser597. Positions 716–720 (KMSKS) match the 'KMSKS' region motif. Lys719 serves as a coordination point for ATP. Ser720 is subject to Phosphoserine. 2 positions are modified to N6-acetyllysine: Lys970 and Lys1047.

This sequence belongs to the class-I aminoacyl-tRNA synthetase family. In terms of assembly, part of the aminoacyl-tRNA synthetase multienzyme complex, also known as multisynthetase complex (MSC), that is composed of the aminoacyl-tRNA ligases for Arg (RARS1), Asp (DARS1), Gln (QARS1), Ile (IARS1), Leu (LARS1), Lys (KARS1), Met (MARS1) the bifunctional ligase for Glu and Pro (EPRS1) and the auxiliary subunits AIMP1/p43, AIMP2/p38 and EEF1E1/p18.

The protein resides in the cytoplasm. It catalyses the reaction tRNA(Leu) + L-leucine + ATP = L-leucyl-tRNA(Leu) + AMP + diphosphate. The enzyme catalyses L-methionyl-tRNA(Leu) + H2O = tRNA(Leu) + L-methionine + H(+). With respect to regulation, 5-fluoro-1,3-dihydro-1-hydroxy-1,2-benzoxaborole inhibits LARS1 by forming a covalent adduct with the 3' adenosine of tRNA(Leu) at the editing site, thus locking the enzyme in an inactive conformation. In terms of biological role, aminoacyl-tRNA synthetase that catalyzes the specific attachment of leucine to its cognate tRNA (tRNA(Leu)). It performs tRNA aminoacylation in a two-step reaction: Leu is initially activated by ATP to form a leucyl-adenylate (Leu-AMP) intermediate; then the leucyl moiety is transferred to the acceptor 3' end of the tRNA to yield leucyl-tRNA. To improve the fidelity of catalytic reactions, it is also able to hydrolyze misactivated aminoacyl-adenylate intermediates (pre-transfer editing) and mischarged aminoacyl-tRNAs (post-transfer editing). The polypeptide is Leucine--tRNA ligase, cytoplasmic (Homo sapiens (Human)).